Consider the following 492-residue polypeptide: Cell death protein 6 (492 aa).

Positions 19-29 (GNNINGEGSSS) are enriched in low complexity. Residues 19-38 (GNNINGEGSSSPSTSAPQVK) are disordered. A PID domain is found at 55–215 (INGHVEYVAR…YILKKKIVEL (161 aa)). Disordered regions lie at residues 241-385 (TGPP…STAA) and 464-492 (TGDLGGIEGESDYGTPSDRLNPKMMNLKQ). The span at 244-268 (PIYPGLGPPALPLSPMPQGPPPNIP) shows a compositional bias: pro residues. The segment covering 300–312 (ASPSVSPASTSPS) has biased composition (low complexity). Residues 313–333 (GPAPSIPPPRPPALAPPPPVA) are compositionally biased toward pro residues. Positions 373 to 383 (FDPRAGEKKST) are enriched in basic and acidic residues.

It belongs to the ced-6 family. In terms of assembly, homodimer. Interacts with ced-1. Interacts with E3 ubiquitin-protein ligase trim-21. Detected in gonadal sheath cells.

The protein localises to the cytoplasm. In terms of biological role, may function as an adapter protein in a pathway that mediates recognition and phagocytosis of apoptotic cells during normal development. Promotes engulfment of cells at both early and late stages of apoptosis. Required for actin reorganization around apoptotic cells. Plays a role in protecting dopaminergic neurons from oxidative stress-induced degeneration. Mediates recruitment of E3 ubiquitin-protein ligase trim-21 to the apoptotic cell surface which promotes ubiquitination and degradation of ced-1. The polypeptide is Cell death protein 6 (Caenorhabditis elegans).